The chain runs to 316 residues: Dehydrogenase/reductase SDR family protein 7-like (316 aa).

Over 1 to 18 (MFFYKIIYFIGFPYIVLR) the chain is Cytoplasmic. The helical; Signal-anchor for type II membrane protein transmembrane segment at 19-39 (LIVSIILPIASLYFIYCNFIA) threads the bilayer. Topologically, residues 40–316 (PKLREKPESS…HKFASSSVKK (277 aa)) are peroxisomal. Residue 56 to 80 (IITGASSGIGAELAKKYARLGCKVT) participates in NAD(+) binding. Position 194 (Ser194) interacts with substrate. The Proton acceptor role is filled by Tyr207.

The protein belongs to the short-chain dehydrogenases/reductases (SDR) family.

The protein resides in the peroxisome membrane. In terms of biological role, putative oxidoreductase. In Dictyostelium discoideum (Social amoeba), this protein is Dehydrogenase/reductase SDR family protein 7-like.